Consider the following 169-residue polypeptide: Peptide deformylase 1 (169 aa).

C93 and H135 together coordinate Fe cation. The active site involves E136. H139 provides a ligand contact to Fe cation.

The protein belongs to the polypeptide deformylase family. Fe(2+) is required as a cofactor.

It carries out the reaction N-terminal N-formyl-L-methionyl-[peptide] + H2O = N-terminal L-methionyl-[peptide] + formate. Removes the formyl group from the N-terminal Met of newly synthesized proteins. Requires at least a dipeptide for an efficient rate of reaction. N-terminal L-methionine is a prerequisite for activity but the enzyme has broad specificity at other positions. The polypeptide is Peptide deformylase 1 (Corynebacterium efficiens (strain DSM 44549 / YS-314 / AJ 12310 / JCM 11189 / NBRC 100395)).